Consider the following 510-residue polypeptide: MTDAVQNETVQEASAQEENKLIAERRAKLDQIRKSCKANGHPNDFRRDSLAGDLQKEFGEKSKEELEALNHVVAIAGRVMAKRGPFLVIQETSGRIQAYADKDVQKVLKDKYQGLDIGDIIGVKGALHKSGKGDLYVNMEEYELLTKALRPLPEKFHGLTDQEMRYRQRYVDLIVNEDSRNAFVVRSKVMSAIRNFMISKQFMEVETPMMHVIPGGASARPFITHHNALDMPMYLRIAPELYLKRLVVGGFDRVFEINRNFRNEGLSPRHNPEFTMMEFYMAYADYKDLMDLTEELLSSVALEVLGSTSMPYGEHTVEFGGTYTRMSMFEAIKHYNPDHAQIQALTEEDIQNRDLMVSIAKSVHVEVEPFWTCGQLLEEIFGETAEPKLMQPTFITGYPADISPLARRSDDNPFFTDRFEFFIGGREVANGFSELNDAEDQDARFKAQVEAKESGDDEAMFYDADYITALEHGLPPTAGQGIGIDRLVMLLTNTHTIRDVILFPAMRPQA.

The Mg(2+) site is built by E420 and E427.

This sequence belongs to the class-II aminoacyl-tRNA synthetase family. Homodimer. It depends on Mg(2+) as a cofactor.

It is found in the cytoplasm. The catalysed reaction is tRNA(Lys) + L-lysine + ATP = L-lysyl-tRNA(Lys) + AMP + diphosphate. This Vibrio vulnificus (strain YJ016) protein is Lysine--tRNA ligase.